The primary structure comprises 502 residues: ATP synthase subunit alpha (502 aa).

ATP is bound at residue 169–176 (GDRQTGKT).

It belongs to the ATPase alpha/beta chains family. F-type ATPases have 2 components, CF(1) - the catalytic core - and CF(0) - the membrane proton channel. CF(1) has five subunits: alpha(3), beta(3), gamma(1), delta(1), epsilon(1). CF(0) has three main subunits: a(1), b(2) and c(9-12). The alpha and beta chains form an alternating ring which encloses part of the gamma chain. CF(1) is attached to CF(0) by a central stalk formed by the gamma and epsilon chains, while a peripheral stalk is formed by the delta and b chains.

The protein localises to the cell inner membrane. The catalysed reaction is ATP + H2O + 4 H(+)(in) = ADP + phosphate + 5 H(+)(out). In terms of biological role, produces ATP from ADP in the presence of a proton gradient across the membrane. The alpha chain is a regulatory subunit. The protein is ATP synthase subunit alpha of Kosmotoga olearia (strain ATCC BAA-1733 / DSM 21960 / TBF 19.5.1).